The chain runs to 280 residues: MDSRVWLPLIGAHLLPRDISVITQMIANNNNTSISRSSTNSSKPEEKNSKKFLIERFLDDDPSPPASILSPSPKAAIPSPIINPAVEFVNGGYGVKNPLAPLISSFETTSIPCSTVSPSSLISSSKDEFQDSLTCHICGKKFGLQRLLNRHIKCHSDLKRYLCTFCGKGFNDTFDLKRHTRTHTGVRPYKCEQCEKSFTQRCSLESHLRKVHGVTHQYAYKERRSKVFVCEDCGYTDEKFEVYLSHIKVVHPFSAAYLRFTQLQKKNSSMKPEQLSKISL.

4 C2H2-type zinc fingers span residues 133-155 (LTCHICGKKFGLQRLLNRHIKCH), 161-183 (YLCTFCGKGFNDTFDLKRHTRTH), 189-212 (YKCEQCEKSFTQRCSLESHLRKVH), and 228-251 (FVCEDCGYTDEKFEVYLSHIKVVH).

It localises to the nucleus. Functionally, transcription factor. Involved in development of the hindgut, the male tail, and the excretory duct cell. Involved in modulating function of excretory duct cells. Plays a role in left/right patterning of cell fates in the hindgut. The sequence is that of Transcription factor ovo-like homolog lin-48 from Caenorhabditis elegans.